The sequence spans 2049 residues: Kinetochore-associated protein rod-1 (2049 aa).

Component of the RZZ complex composed of rod-1, czw-1 and zwl-1. Interacts (via N-terminus) with NDC80 complex component ndc-80.

It localises to the chromosome. Its subcellular location is the centromere. It is found in the kinetochore. The protein resides in the cytoplasm. The protein localises to the cytoskeleton. It localises to the spindle. Its function is as follows. Essential component of the mitotic checkpoint, which prevents cells from prematurely exiting mitosis. Required for chromosome segregation, the assembly of the dynein-dynactin and mdf-1-mdf-2 complexes onto kinetochores and spindle pole separation. Plays a role in nuclear envelope breakdown. Its function related to the spindle assembly machinery and kinetochore-microtubule attachments likely depends on its association in the mitotic RZZ complex. The RZZ complex recruits the spindly-like protein spdl-1 to kinetochores. To prevent irregular chromosome segregation, the complex also inhibits the attachment of the kinetochore-associated NDC80 complex to microtubules. The recruitment of spdl-1 to kinetochores relieves this inhibition. Required for embryonic development. In Caenorhabditis elegans, this protein is Kinetochore-associated protein rod-1.